We begin with the raw amino-acid sequence, 270 residues long: uncharacterized protein (270 aa).

The N-terminal stretch at 1 to 23 (MKKLLIILAATLVLVLGSSGNFR) is a signal peptide.

This is an uncharacterized protein from Archaeoglobus fulgidus (strain ATCC 49558 / DSM 4304 / JCM 9628 / NBRC 100126 / VC-16).